We begin with the raw amino-acid sequence, 475 residues long: Ankyrin repeat, SAM and basic leucine zipper domain-containing protein 1 (475 aa).

The segment at 1 to 25 (MAASALRGLPVAGGGESSESEDDGW) is disordered. Phosphoserine is present on residues Ser17, Ser18, and Ser20. ANK repeat units follow at residues 45 to 74 (EKKE…SVDS), 78 to 107 (YGWT…NASF), 110 to 144 (DKQS…DPNV), 148 to 177 (RLMT…EVNT), 181 to 210 (NGYT…NKML), and 214 to 243 (DGKM…PLEG). Positions 272–334 (SYTAFGDLEV…KILAALKELQ (63 aa)) constitute an SAM domain.

Interacts with DDX4, PIWIL1, RANBP9 and TDRD1.

It is found in the cytoplasm. Its function is as follows. Plays a central role during spermatogenesis by repressing transposable elements and preventing their mobilization, which is essential for the germline integrity. Acts via the piRNA metabolic process, which mediates the repression of transposable elements during meiosis by forming complexes composed of piRNAs and Piwi proteins and governs the methylation and subsequent repression of transposons. Its association with pi-bodies suggests a participation in the primary piRNAs metabolic process. Required prior to the pachytene stage to facilitate the production of multiple types of piRNAs, including those associated with repeats involved in the regulation of retrotransposons. May act by mediating protein-protein interactions during germ cell maturation. This Pan troglodytes (Chimpanzee) protein is Ankyrin repeat, SAM and basic leucine zipper domain-containing protein 1 (ASZ1).